Here is a 213-residue protein sequence, read N- to C-terminus: Small ribosomal subunit protein uS5 (213 aa).

The interval 1 to 41 (MSGRERNGGRSAENNDKKERNERNGRNDRGGRNDRRNQQDE) is disordered. The 64-residue stretch at 45-108 (FIERVVTINR…EEARKNFFRV (64 aa)) folds into the S5 DRBM domain.

Belongs to the universal ribosomal protein uS5 family. In terms of assembly, part of the 30S ribosomal subunit. Contacts proteins S4 and S8.

Functionally, with S4 and S12 plays an important role in translational accuracy. In terms of biological role, located at the back of the 30S subunit body where it stabilizes the conformation of the head with respect to the body. The sequence is that of Small ribosomal subunit protein uS5 from Corynebacterium jeikeium (strain K411).